A 101-amino-acid polypeptide reads, in one-letter code: Small ribosomal subunit protein uS14 (101 aa).

It belongs to the universal ribosomal protein uS14 family. Part of the 30S ribosomal subunit. Contacts proteins S3 and S10.

Binds 16S rRNA, required for the assembly of 30S particles and may also be responsible for determining the conformation of the 16S rRNA at the A site. The polypeptide is Small ribosomal subunit protein uS14 (Bordetella petrii (strain ATCC BAA-461 / DSM 12804 / CCUG 43448)).